The primary structure comprises 1375 residues: Mediator of RNA polymerase II transcription subunit 13 (1375 aa).

The interval 1-51 (MKASEMARPPMRPGNPHAFASPATTPSRTASPNNAQGANVRTTQGGNQAGA) is disordered. The span at 22–51 (PATTPSRTASPNNAQGANVRTTQGGNQAGA) shows a compositional bias: polar residues. Coiled coils occupy residues 182 to 216 (ADDS…WLSR) and 297 to 324 (QLER…KDEA). Over residues 313–324 (AEEDAMRRKDEA) the composition is skewed to basic and acidic residues. Disordered regions lie at residues 313 to 333 (AEED…SSPF), 350 to 370 (YPTP…DTPS), 397 to 417 (YTTT…APLE), 537 to 581 (ATSP…PASL), 660 to 689 (RAVS…VDTH), 841 to 862 (QAKG…IPSN), and 1233 to 1285 (TPTT…AADP). Residues 397-411 (YTTTDNQQHASTSPT) are compositionally biased toward polar residues. Acidic residues predominate over residues 666-685 (SASDSESETSDMSEGSPEDP). Residues 1233–1259 (TPTTPAPSNSSAQANTNTPGSTPQTGV) are compositionally biased toward polar residues.

The protein belongs to the Mediator complex subunit 13 family. Component of the SRB8-11 complex, which itself associates with the Mediator complex.

The protein localises to the nucleus. In terms of biological role, component of the SRB8-11 complex. The SRB8-11 complex is a regulatory module of the Mediator complex which is itself involved in regulation of basal and activated RNA polymerase II-dependent transcription. The SRB8-11 complex may be involved in the transcriptional repression of a subset of genes regulated by Mediator. It may inhibit the association of the Mediator complex with RNA polymerase II to form the holoenzyme complex. The sequence is that of Mediator of RNA polymerase II transcription subunit 13 (SSN2) from Phaeosphaeria nodorum (strain SN15 / ATCC MYA-4574 / FGSC 10173) (Glume blotch fungus).